The primary structure comprises 239 residues: Ubiquinone biosynthesis O-methyltransferase (239 aa).

Residues Arg-44, Gly-63, Asp-84, and Met-128 each contribute to the S-adenosyl-L-methionine site.

This sequence belongs to the methyltransferase superfamily. UbiG/COQ3 family.

It carries out the reaction a 3-demethylubiquinol + S-adenosyl-L-methionine = a ubiquinol + S-adenosyl-L-homocysteine + H(+). The catalysed reaction is a 3-(all-trans-polyprenyl)benzene-1,2-diol + S-adenosyl-L-methionine = a 2-methoxy-6-(all-trans-polyprenyl)phenol + S-adenosyl-L-homocysteine + H(+). Its pathway is cofactor biosynthesis; ubiquinone biosynthesis. Functionally, O-methyltransferase that catalyzes the 2 O-methylation steps in the ubiquinone biosynthetic pathway. This is Ubiquinone biosynthesis O-methyltransferase from Xanthomonas campestris pv. campestris (strain 8004).